A 191-amino-acid polypeptide reads, in one-letter code: Peptidyl-tRNA hydrolase (191 aa).

Tyr-17 contributes to the tRNA binding site. His-22 serves as the catalytic Proton acceptor. TRNA-binding residues include Tyr-68, Asn-70, and Asn-116.

It belongs to the PTH family. In terms of assembly, monomer.

It is found in the cytoplasm. It carries out the reaction an N-acyl-L-alpha-aminoacyl-tRNA + H2O = an N-acyl-L-amino acid + a tRNA + H(+). Hydrolyzes ribosome-free peptidyl-tRNAs (with 1 or more amino acids incorporated), which drop off the ribosome during protein synthesis, or as a result of ribosome stalling. In terms of biological role, catalyzes the release of premature peptidyl moieties from peptidyl-tRNA molecules trapped in stalled 50S ribosomal subunits, and thus maintains levels of free tRNAs and 50S ribosomes. The sequence is that of Peptidyl-tRNA hydrolase from Mycobacterium tuberculosis (strain ATCC 25177 / H37Ra).